A 152-amino-acid chain; its full sequence is Deoxyuridine 5'-triphosphate nucleotidohydrolase (152 aa).

Residues arginine 72–glycine 74, asparagine 85, threonine 89–aspartate 91, and lysine 99 contribute to the substrate site.

It belongs to the dUTPase family. It depends on Mg(2+) as a cofactor.

It catalyses the reaction dUTP + H2O = dUMP + diphosphate + H(+). It functions in the pathway pyrimidine metabolism; dUMP biosynthesis; dUMP from dCTP (dUTP route): step 2/2. In terms of biological role, this enzyme is involved in nucleotide metabolism: it produces dUMP, the immediate precursor of thymidine nucleotides and it decreases the intracellular concentration of dUTP so that uracil cannot be incorporated into DNA. The polypeptide is Deoxyuridine 5'-triphosphate nucleotidohydrolase (Bradyrhizobium diazoefficiens (strain JCM 10833 / BCRC 13528 / IAM 13628 / NBRC 14792 / USDA 110)).